We begin with the raw amino-acid sequence, 111 residues long: Large ribosomal subunit protein uL22 (111 aa).

This sequence belongs to the universal ribosomal protein uL22 family. Part of the 50S ribosomal subunit.

In terms of biological role, this protein binds specifically to 23S rRNA; its binding is stimulated by other ribosomal proteins, e.g. L4, L17, and L20. It is important during the early stages of 50S assembly. It makes multiple contacts with different domains of the 23S rRNA in the assembled 50S subunit and ribosome. Functionally, the globular domain of the protein is located near the polypeptide exit tunnel on the outside of the subunit, while an extended beta-hairpin is found that lines the wall of the exit tunnel in the center of the 70S ribosome. The polypeptide is Large ribosomal subunit protein uL22 (Xanthomonas euvesicatoria pv. vesicatoria (strain 85-10) (Xanthomonas campestris pv. vesicatoria)).